The primary structure comprises 367 residues: MAPTKDSVIHMGAESWDEISEFVTKKGHGVKGLSELGIKTLPKQFHQPLEERFSEKKILERASIPLIDMSKWDSPEVVKSICDAAEHWGFFQIVNHGVPLETLQRVKEATHRFFALPAEEKNKYSKENSPINNVRFGSSFVPHVEKALEWKDFLSMFYVSEEETNTYWPPICRDEMLEYMRSSEVLIKRLMEVLVVKGLKVKQIDEIREPMLVGSRRINLNYYPKCPNPELTLGVGRHSDISTFTILLQDEIGGLHVRKLDDTGNTWVHVTPISGSLIINIGDALQIMSNGRYKSIEHMVVANGTQDRISVPLFVNPKPQAILCPFPEVLANGEKPVYKPVLCSDYSRHFYTKPHDGKKTVDFALMN.

In terms of domain architecture, Fe2OG dioxygenase spans 207 to 317; the sequence is IREPMLVGSR…RISVPLFVNP (111 aa). Residue Tyr-223 coordinates 2-oxoglutarate. Fe cation-binding residues include His-238, Asp-240, and His-298. Arg-308 and Ser-310 together coordinate 2-oxoglutarate.

It belongs to the iron/ascorbate-dependent oxidoreductase family. Requires L-ascorbate as cofactor. The cofactor is Fe(2+).

The catalysed reaction is (E)-4-coumaroyl-CoA + 2-oxoglutarate + O2 = (E)-2,4-dihydroxycinnamoyl-CoA + succinate + CO2. It carries out the reaction (E)-feruloyl-CoA + 2-oxoglutarate + O2 = (E)-6-hydroxyferuloyl-CoA + succinate + CO2. The protein operates within phenylpropanoid metabolism. With respect to regulation, repressed by the competitive inhibitor psoralen, but not by umbelliferone, xanthotoxin, bergapten and isopimpinellin. In terms of biological role, 2-oxoglutarate (OG)- and Fe(II)-dependent dioxygenase (2OGD) involved in scopoletin and umbelliferone biosynthesis. Converts feruloyl CoA into 6'-hydroxyferuloyl CoA, and p-coumaroyl CoA into 2,4-dihydroxycinnamoyl-CoA. Has no activity with cinnamic acid, caffeic acid, p-coumaric acid, ferulic acid, cinnamoyl-CoA and caffeoyl-CoA. The sequence is that of Bi-functional coumaroyl CoA and feruloyl CoA ortho-hydroxylase Diox4 from Ruta graveolens (Common rue).